The sequence spans 703 residues: DNA ligase (703 aa).

Residues 54–58 (DAEYD), 103–104 (SL), and E132 each bind NAD(+). Catalysis depends on K134, which acts as the N6-AMP-lysine intermediate. NAD(+) contacts are provided by R155, E192, K308, and K332. C426, C429, C444, and C450 together coordinate Zn(2+). The BRCT domain occupies 608–698 (EGPGPLDGVV…ADAARALAVP (91 aa)).

Belongs to the NAD-dependent DNA ligase family. LigA subfamily. Mg(2+) is required as a cofactor. Mn(2+) serves as cofactor.

The enzyme catalyses NAD(+) + (deoxyribonucleotide)n-3'-hydroxyl + 5'-phospho-(deoxyribonucleotide)m = (deoxyribonucleotide)n+m + AMP + beta-nicotinamide D-nucleotide.. Functionally, DNA ligase that catalyzes the formation of phosphodiester linkages between 5'-phosphoryl and 3'-hydroxyl groups in double-stranded DNA using NAD as a coenzyme and as the energy source for the reaction. It is essential for DNA replication and repair of damaged DNA. The protein is DNA ligase of Parafrankia sp. (strain EAN1pec).